Consider the following 320-residue polypeptide: Cytochrome f (320 aa).

An N-terminal signal peptide occupies residues 1–35; that stretch reads MQNRNTFSWVKEQMTRFISVSIMIYVITRTSISNA. 4 residues coordinate heme: Tyr36, Cys56, Cys59, and His60. Residues 286–306 traverse the membrane as a helical segment; the sequence is VQGLLFFLASVILAQIFLVLK.

The protein belongs to the cytochrome f family. As to quaternary structure, the 4 large subunits of the cytochrome b6-f complex are cytochrome b6, subunit IV (17 kDa polypeptide, petD), cytochrome f and the Rieske protein, while the 4 small subunits are PetG, PetL, PetM and PetN. The complex functions as a dimer. It depends on heme as a cofactor.

It is found in the plastid. It localises to the chloroplast thylakoid membrane. Its function is as follows. Component of the cytochrome b6-f complex, which mediates electron transfer between photosystem II (PSII) and photosystem I (PSI), cyclic electron flow around PSI, and state transitions. The polypeptide is Cytochrome f (Liriodendron tulipifera (Tuliptree)).